The sequence spans 131 residues: Snaclec A13 (131 aa).

Cystine bridges form between cysteine 4-cysteine 15, cysteine 32-cysteine 125, and cysteine 100-cysteine 117. One can recognise a C-type lectin domain in the interval 11 to 126 (YEGHCYKVFN…CELAYHFICM (116 aa)).

This sequence belongs to the snaclec family. Heterodimer; disulfide-linked. As to expression, expressed by the venom gland.

The protein resides in the secreted. Interferes with one step of hemostasis (modulation of platelet aggregation, or coagulation cascade, for example). The chain is Snaclec A13 from Macrovipera lebetinus (Levantine viper).